Reading from the N-terminus, the 243-residue chain is Zinc import ATP-binding protein ZnuC (243 aa).

The ABC transporter domain maps to leucine 8–histidine 225. Glycine 40–serine 47 is a binding site for ATP.

This sequence belongs to the ABC transporter superfamily. Zinc importer (TC 3.A.1.15.5) family. In terms of assembly, the complex is composed of two ATP-binding proteins (ZnuC), two transmembrane proteins (ZnuB) and a solute-binding protein (ZnuA).

The protein resides in the cell inner membrane. It catalyses the reaction Zn(2+)(out) + ATP(in) + H2O(in) = Zn(2+)(in) + ADP(in) + phosphate(in) + H(+)(in). Its function is as follows. Part of the ABC transporter complex ZnuABC involved in zinc import. Responsible for energy coupling to the transport system. The chain is Zinc import ATP-binding protein ZnuC from Psychrobacter arcticus (strain DSM 17307 / VKM B-2377 / 273-4).